Reading from the N-terminus, the 341-residue chain is LRP2-binding protein (341 aa).

The TPR repeat unit spans residues 56 to 89 (VQANFLLGQLFFEEGWYEDALLQFEKVKDEDNQA). Sel1-like repeat units follow at residues 90–122 (LYQA…TSDC), 130–165 (YAAA…DNGN), 170–203 (LKAQ…GNGS), 204–239 (LESQ…ERGN), 240–271 (VYAQ…SHDN), and 291–326 (AIAT…QLDA).

Its subcellular location is the cytoplasm. May act as an adapter that regulates LRP2 function. In Xenopus laevis (African clawed frog), this protein is LRP2-binding protein (lrp2bp).